Consider the following 134-residue polypeptide: MAEESSKAVKYYTLEEIQKHNNSKSTWLILHYKVYDLTKFLEEHPGGEEVLREQAGGDATENFEDVGHSTDARELSKTFIIGELHPDDRSKITKPSESIITTIDSNPSWWTNWLIPAISALFVALIYHLYTSEN.

A2 bears the N-acetylalanine mark. N6-acetyllysine occurs at positions 7, 10, and 19. One can recognise a Cytochrome b5 heme-binding domain in the interval 9–85 (VKYYTLEEIQ…SKTFIIGELH (77 aa)). 2 residues coordinate heme: H44 and H68. Residues 109–131 (WWTNWLIPAISALFVALIYHLYT) traverse the membrane as a helical segment.

The protein belongs to the cytochrome b5 family.

It localises to the endoplasmic reticulum membrane. Its subcellular location is the microsome membrane. In terms of biological role, cytochrome b5 is a membrane-bound hemoprotein functioning as an electron carrier for several membrane-bound oxygenases. The sequence is that of Cytochrome b5 (CYB5A) from Bos taurus (Bovine).